Here is a 48-residue protein sequence, read N- to C-terminus: Fimbrial assembly protein, serogroup E2 (48 aa).

This Dichelobacter nodosus (Bacteroides nodosus) protein is Fimbrial assembly protein, serogroup E2 (fimB).